A 596-amino-acid polypeptide reads, in one-letter code: A-type ATP synthase subunit A (596 aa).

Residue 241 to 248 coordinates ATP; sequence GPFGSGKT.

The protein belongs to the ATPase alpha/beta chains family. In terms of assembly, has multiple subunits with at least A(3), B(3), C, D, E, F, H, I and proteolipid K(x).

It localises to the cell membrane. It carries out the reaction ATP + H2O + 4 H(+)(in) = ADP + phosphate + 5 H(+)(out). Its function is as follows. Component of the A-type ATP synthase that produces ATP from ADP in the presence of a proton gradient across the membrane. The A chain is the catalytic subunit. The polypeptide is A-type ATP synthase subunit A (Ignicoccus hospitalis (strain KIN4/I / DSM 18386 / JCM 14125)).